The sequence spans 1389 residues: DNA-directed RNA polymerase subunit beta'' (1389 aa).

The Zn(2+) site is built by Cys-220, Cys-290, Cys-297, and Cys-300.

Belongs to the RNA polymerase beta' chain family. RpoC2 subfamily. In terms of assembly, in plastids the minimal PEP RNA polymerase catalytic core is composed of four subunits: alpha, beta, beta', and beta''. When a (nuclear-encoded) sigma factor is associated with the core the holoenzyme is formed, which can initiate transcription. Zn(2+) serves as cofactor.

It is found in the plastid. It localises to the chloroplast. The catalysed reaction is RNA(n) + a ribonucleoside 5'-triphosphate = RNA(n+1) + diphosphate. In terms of biological role, DNA-dependent RNA polymerase catalyzes the transcription of DNA into RNA using the four ribonucleoside triphosphates as substrates. The polypeptide is DNA-directed RNA polymerase subunit beta'' (Chloranthus spicatus (Chulantree)).